We begin with the raw amino-acid sequence, 135 residues long: MKVLLVLTDAYSDCEKAITYAVNFSEKLGAELDILAVLEDVYNLERANVTFGLPFPPEIKEESKKRIERRLREVWEKLTGSTEIPGVEYRIGPLSEEVKKFVEGKGYELVVWACYPSAYLCKVIDGLNLASLIVK.

It belongs to the universal stress protein A family.

The sequence is that of Universal stress protein Aq_178 from Aquifex aeolicus (strain VF5).